The chain runs to 310 residues: MDEESVSNGSLFSKFEGEETMGKVLLFSIVSIFTGILFLLLLHLYARLFWWRVEQHFNLNLIQSDDPGSTVIGRNPRRRRFVFAQSQEDPLHNAGLDSKILQSIHVVVFKCTDFKDGLECAVCLSDLVDGDKARVLPRCNHGFHVDCIDMWFQSHSTCPLCRNTVGSVEDTTHGGSEGLPQNQNFESGHSTNQHNPSQDQSFVHEFSTEPLSFPTNVLVWGDQNQVRSAGLVVTEESPSGNFAASYNDHQQESSSTRSQEVTAVVVDIPDNSSENLSERIDEEEPKSPMFTRLRLLKNVLSREKTNNNNV.

The helical transmembrane segment at 24–44 (VLLFSIVSIFTGILFLLLLHL) threads the bilayer. Residues 120 to 162 (CAVCLSDLVDGDKARVLPRCNHGFHVDCIDMWFQSHSTCPLCR) form an RING-type; atypical zinc finger. Disordered stretches follow at residues 170–201 (DTTH…QDQS) and 240–260 (GNFA…RSQE). Residues 179 to 201 (LPQNQNFESGHSTNQHNPSQDQS) are compositionally biased toward polar residues.

It belongs to the RING-type zinc finger family. ATL subfamily.

It is found in the membrane. The catalysed reaction is S-ubiquitinyl-[E2 ubiquitin-conjugating enzyme]-L-cysteine + [acceptor protein]-L-lysine = [E2 ubiquitin-conjugating enzyme]-L-cysteine + N(6)-ubiquitinyl-[acceptor protein]-L-lysine.. The protein operates within protein modification; protein ubiquitination. This is RING-H2 finger protein ATL60 (ATL60) from Arabidopsis thaliana (Mouse-ear cress).